A 137-amino-acid polypeptide reads, in one-letter code: Nucleoside diphosphate kinase (137 aa).

ATP contacts are provided by Lys9, Phe57, Arg85, Thr91, Arg102, and Asn112. His115 acts as the Pros-phosphohistidine intermediate in catalysis.

It belongs to the NDK family. Homotetramer. The cofactor is Mg(2+).

Its subcellular location is the cytoplasm. It catalyses the reaction a 2'-deoxyribonucleoside 5'-diphosphate + ATP = a 2'-deoxyribonucleoside 5'-triphosphate + ADP. The enzyme catalyses a ribonucleoside 5'-diphosphate + ATP = a ribonucleoside 5'-triphosphate + ADP. Its function is as follows. Major role in the synthesis of nucleoside triphosphates other than ATP. The ATP gamma phosphate is transferred to the NDP beta phosphate via a ping-pong mechanism, using a phosphorylated active-site intermediate. The protein is Nucleoside diphosphate kinase of Campylobacter lari (strain RM2100 / D67 / ATCC BAA-1060).